The primary structure comprises 695 residues: ATP-dependent permease MDL1, mitochondrial (695 aa).

Residues 1–100 constitute a mitochondrion transit peptide; sequence MIVRMIRLCK…RLFVLSKPES (100 aa). Transmembrane regions (helical) follow at residues 103–123, 156–176, 242–262, 337–357, and 372–392; these read IGLA…VPSV, FTAL…RIII, FVGF…MMIL, GLFF…LLLV, and LSSF…LSSF. The ABC transmembrane type-1 domain maps to 103 to 398; sequence IGLALLLILI…LSSFYSELMK (296 aa). The region spanning 432-673 is the ABC transporter domain; that stretch reads IVFKNVSFTY…PNSELNALLA (242 aa). 467–474 contributes to the ATP binding site; that stretch reads GPSGSGKS.

The protein belongs to the ABC transporter superfamily. ABCB family. Mitochondrial peptide exporter (TC 3.A.1.212) subfamily.

It is found in the mitochondrion inner membrane. Mediates export of peptides with molecular masses of 2100 to 600 daltons generated upon proteolysis of mitochondrial inner membrane proteins. This Saccharomyces cerevisiae (strain ATCC 204508 / S288c) (Baker's yeast) protein is ATP-dependent permease MDL1, mitochondrial (MDL1).